We begin with the raw amino-acid sequence, 180 residues long: Cytokinin-beta-glucosidase (180 aa).

In terms of tissue distribution, accumulates in young leaves and shoot tips.

Hydrolyzes cytokinin glucosides thus liberating free cytokinins. The chain is Cytokinin-beta-glucosidase (TROLC) from Nicotiana tabacum (Common tobacco).